A 122-amino-acid polypeptide reads, in one-letter code: ATP-dependent Clp protease adapter protein ClpS (122 aa).

A disordered region spans residues 1 to 27 (MVRMATKPPSMTPTPPTGAPPRDDGGS). Residues 10–19 (SMTPTPPTGA) are compositionally biased toward pro residues.

It belongs to the ClpS family. Binds to the N-terminal domain of the chaperone ClpA.

Its function is as follows. Involved in the modulation of the specificity of the ClpAP-mediated ATP-dependent protein degradation. This chain is ATP-dependent Clp protease adapter protein ClpS, found in Paracidovorax citrulli (strain AAC00-1) (Acidovorax citrulli).